A 3953-amino-acid chain; its full sequence is Zinc finger protein 469 (3953 aa).

Disordered regions lie at residues 1-274 (MPGE…VSFQ), 313-465 (WPEE…MFFN), 512-672 (EWQG…FPFP), 763-784 (GHQRSPGPPGLPSPPAAPRVPA), 869-1383 (ADEE…HSEL), 1400-1461 (PKPS…DLPV), 1575-1610 (LQRSKDTRGAPRELAEAESVGRVELGTGTEPPSQRR), 1703-1864 (SKTG…GASS), 1884-1947 (VSNT…TVEG), 1991-2030 (KTQGQGTANQLQPENGVSPGGTDNHASVNASPKTALTGPT), 2070-2700 (LTAA…TLGP), 2716-2915 (AGET…LSDS), 3001-3036 (EMPAPADDSSSSLGDVSPEPPSLERERCDGGLPGNT), and 3072-3110 (GPSFLDFEGTASSQGPQSRRTEEAAGAGRAQGRGRPAKG). A compositionally biased stretch (polar residues) spans 187–198 (PPSSFTSTNYTS). 2 stretches are compositionally biased toward pro residues: residues 202–211 (TPRPPAPGPP) and 324–335 (YPLPTQPAPSPL). A compositionally biased stretch (low complexity) spans 603-623 (STCSSLSPMSSSPANPSSEES). Composition is skewed to pro residues over residues 768-780 (PGPPGLPSPPAAP) and 896-911 (KAPPPLPAATPDPQTP). The span at 944 to 953 (QQRRGKQLKL) shows a compositional bias: basic residues. Residues 963-975 (AAEGSGSGGGGRA) are compositionally biased toward gly residues. Residues 981–991 (RRNDGLGERPP) are compositionally biased toward basic and acidic residues. Low complexity predominate over residues 1005–1017 (RADPAPRVPRAAA). Basic residues-rich tracts occupy residues 1025-1042 (SRRRRLPPRKDPRKRKAR) and 1058-1070 (KNRRHRRLGRRAG). Positions 1082 to 1093 (PGAEDRRLREYD) are enriched in basic and acidic residues. Positions 1094–1103 (FASESEEDEQ) are enriched in acidic residues. A compositionally biased stretch (basic and acidic residues) spans 1120–1137 (KRKEVELTQGPREDEPQK). The segment covering 1158-1177 (PGGSRPGPGRSPQARGPSRS) has biased composition (low complexity). Residues 1213–1229 (EETRPSLDFPQEAKEPE) are compositionally biased toward basic and acidic residues. 2 stretches are compositionally biased toward polar residues: residues 1278–1290 (PKPSGSLANTAPH) and 1333–1350 (NPSSTACPKPSVLSSKIS). Basic and acidic residues predominate over residues 1577–1595 (RSKDTRGAPRELAEAESVG). Polar residues-rich tracts occupy residues 1991 to 2005 (KTQGQGTANQLQPEN) and 2014 to 2024 (NHASVNASPKT). Over residues 2243 to 2262 (DTPKDSTLRIPEDSRKEKLW) the composition is skewed to basic and acidic residues. Residues 2409–2435 (TAPSSTASDFQSDSPQSHRNASHQTPQ) are compositionally biased toward polar residues. A C2H2-type 1 zinc finger spans residues 2472–2498 (VTCEVCAASFRSGPGLSRHKARKHRPH). A compositionally biased stretch (basic residues) spans 2488–2498 (SRHKARKHRPH). A compositionally biased stretch (low complexity) spans 2506–2521 (SPAALPAQQPLEPLAQ). Positions 2534–2546 (SGKERPNHSRGDP) are enriched in basic and acidic residues. Over residues 2565 to 2574 (PGSPHSQQLH) the composition is skewed to low complexity. The span at 2592–2631 (PRPDQAREDELHPKQAEKREGRRWRREPTVDSPSHSEGKS) shows a compositional bias: basic and acidic residues. Over residues 2632-2642 (NKKRGKLRGRR) the composition is skewed to basic residues. A compositionally biased stretch (low complexity) spans 2664 to 2676 (PSPAMASYAASPS). Basic and acidic residues predominate over residues 2777-2787 (DSSRAHSRSEE). Over residues 2805–2816 (TSSSPADSTTSS) the composition is skewed to low complexity. Over residues 2869-2879 (LTRKRNPHVYG) the composition is skewed to basic residues. Over residues 3095-3105 (AAGAGRAQGRG) the composition is skewed to low complexity. A C2H2-type 2 zinc finger spans residues 3115–3137 (YKCKVCFQRFRSLGELDLHKLAH). Residues 3232–3322 (TEPAPKHHRG…PDPWAGGEPL (91 aa)) are disordered. A compositionally biased stretch (basic and acidic residues) spans 3260 to 3272 (GEAKKDSPGERAK). Positions 3302 to 3314 (PGPPRTTPSPSPD) are enriched in pro residues. 2 consecutive C2H2-type zinc fingers follow at residues 3337–3359 (RDCHHCGKRFPKPFKLQRHLAVH) and 3365–3388 (YLCPRCPRVYPEHGELLAHLGGAH). The C2H2-type 5; degenerate zinc finger occupies 3418–3442 (FACSSCNYTFAKKEQFDRHMNKHLR). 3 disordered regions span residues 3448-3501 (FAFR…PILS), 3518-3559 (STTK…SPFP), and 3576-3925 (ERPE…HRTA). Positions 3584 to 3602 (PGSPGPLLQQALPLGASLP) are enriched in low complexity. Over residues 3633 to 3651 (CAPDHFQEDHLLQKEKEVS) the composition is skewed to basic and acidic residues. 2 stretches are compositionally biased toward low complexity: residues 3728-3741 (PGPSSQGSGSPRPG) and 3749-3759 (QPQPASGQLQS). Basic and acidic residues-rich tracts occupy residues 3876–3892 (EQRKAEPGHTQRKDRLG) and 3915–3925 (EPAEPHTHRTA).

The protein belongs to the krueppel C2H2-type zinc-finger protein family. Detected in cornea, sclera, skin fibroblasts and striated muscle.

The protein resides in the nucleus. Its function is as follows. May be involved in transcriptional regulation. This chain is Zinc finger protein 469 (ZNF469), found in Homo sapiens (Human).